Consider the following 428-residue polypeptide: Adenylosuccinate synthetase 1 (428 aa).

Residues 12–18 (GDEGKGK) and 40–42 (GHT) each bind GTP. Residue Asp-13 is the Proton acceptor of the active site. Mg(2+)-binding residues include Asp-13 and Gly-40. IMP-binding positions include 13 to 16 (DEGK), 38 to 41 (NAGH), Thr-133, Arg-147, Asn-224, Thr-239, and Arg-303. His-41 serves as the catalytic Proton donor. 299 to 305 (TTTGRRR) is a substrate binding site. Residues Arg-305, 331–333 (KLD), and 413–415 (GVG) each bind GTP.

Belongs to the adenylosuccinate synthetase family. As to quaternary structure, homodimer. Requires Mg(2+) as cofactor.

It localises to the cytoplasm. The enzyme catalyses IMP + L-aspartate + GTP = N(6)-(1,2-dicarboxyethyl)-AMP + GDP + phosphate + 2 H(+). It participates in purine metabolism; AMP biosynthesis via de novo pathway; AMP from IMP: step 1/2. Functionally, plays an important role in the de novo pathway and in the salvage pathway of purine nucleotide biosynthesis. Catalyzes the first committed step in the biosynthesis of AMP from IMP. This Laccaria bicolor (strain S238N-H82 / ATCC MYA-4686) (Bicoloured deceiver) protein is Adenylosuccinate synthetase 1.